The following is a 100-amino-acid chain: Urease subunit gamma (100 aa).

This sequence belongs to the urease gamma subunit family. Heterotrimer of UreA (gamma), UreB (beta) and UreC (alpha) subunits. Three heterotrimers associate to form the active enzyme.

It is found in the cytoplasm. The catalysed reaction is urea + 2 H2O + H(+) = hydrogencarbonate + 2 NH4(+). The protein operates within nitrogen metabolism; urea degradation; CO(2) and NH(3) from urea (urease route): step 1/1. This is Urease subunit gamma from Rhodopseudomonas palustris (strain ATCC BAA-98 / CGA009).